Consider the following 384-residue polypeptide: Polyketide synthase BAS (384 aa).

C157 (nucleophile and monoketide coumarate intermediate) is an active-site residue. C157 carries the post-translational modification S-(4-hydroxycinnamyl)cysteine.

The protein belongs to the thiolase-like superfamily. Chalcone/stilbene synthases family. As to quaternary structure, homodimer.

The catalysed reaction is 4-coumaroyl-CoA + malonyl-CoA + H2O + H(+) = 4-hydroxybenzalacetone + 2 CO2 + 2 CoA. It functions in the pathway secondary metabolite biosynthesis; flavonoid biosynthesis. Its function is as follows. Polyketide synthase producing 4-hydroxybenzalacetone. Can use p-coumaryl-CoA as substrate but does not accept hexanoyl-CoA, isobutyryl-CoA, isovaleryl-CoA, and acetyl-CoA as a substrates. Catalyzes the initial key reaction step in the biosynthesis of phenylbutanoids. In Rheum palmatum (Chinese rhubarb), this protein is Polyketide synthase BAS (BAS).